The sequence spans 456 residues: CBL-interacting protein kinase 9 (456 aa).

Positions Tyr27–Phe282 constitute a Protein kinase domain. ATP contacts are provided by residues Ile33 to Val41 and Lys56. Asp150 acts as the Proton acceptor in catalysis. An activation loop region spans residues Asp168–Glu197. In terms of domain architecture, NAF spans Arg318–Glu343. The interval Lys351–Val380 is PPI.

It belongs to the protein kinase superfamily. CAMK Ser/Thr protein kinase family. SNF1 subfamily. Mn(2+) is required as a cofactor.

The catalysed reaction is L-seryl-[protein] + ATP = O-phospho-L-seryl-[protein] + ADP + H(+). It carries out the reaction L-threonyl-[protein] + ATP = O-phospho-L-threonyl-[protein] + ADP + H(+). CIPK serine-threonine protein kinases interact with CBL proteins. Binding of a CBL protein to the regulatory NAF domain of CIPK protein lead to the activation of the kinase in a calcium-dependent manner. The sequence is that of CBL-interacting protein kinase 9 (CIPK9) from Oryza sativa subsp. japonica (Rice).